The sequence spans 107 residues: Replication initiation control protein YabA (107 aa).

4 residues coordinate Zn(2+): H81, C83, C97, and C100.

It belongs to the YabA family. As to quaternary structure, homotetramer. Interacts with both DnaA and DnaN, acting as a bridge between these two proteins. Requires Zn(2+) as cofactor.

Its subcellular location is the cytoplasm. It localises to the nucleoid. Functionally, involved in control of chromosome replication initiation. Inhibits the cooperative binding of DnaA to the oriC region, thus negatively regulating initiation of chromosome replication. Inhibits the ability of DnaA-ATP to form a helix on DNA; does not disassemble preformed DnaA-DNA helices. Decreases the residence time of DnaA on the chromosome at its binding sites (oriC, replication forks and promoter-binding sites). Tethers DnaA to the replication machinery via the DNA polymerase beta sliding clamp subunit (dnaN). Associates with oriC and other DnaA targets on the chromosome in a DnaA-dependent manner. In Streptococcus pyogenes serotype M18 (strain MGAS8232), this protein is Replication initiation control protein YabA.